The sequence spans 263 residues: 3-deoxy-manno-octulosonate cytidylyltransferase (263 aa).

Belongs to the KdsB family.

It localises to the cytoplasm. The catalysed reaction is 3-deoxy-alpha-D-manno-oct-2-ulosonate + CTP = CMP-3-deoxy-beta-D-manno-octulosonate + diphosphate. The protein operates within nucleotide-sugar biosynthesis; CMP-3-deoxy-D-manno-octulosonate biosynthesis; CMP-3-deoxy-D-manno-octulosonate from 3-deoxy-D-manno-octulosonate and CTP: step 1/1. It functions in the pathway bacterial outer membrane biogenesis; lipopolysaccharide biosynthesis. Activates KDO (a required 8-carbon sugar) for incorporation into bacterial lipopolysaccharide in Gram-negative bacteria. In Burkholderia mallei (strain NCTC 10229), this protein is 3-deoxy-manno-octulosonate cytidylyltransferase.